The chain runs to 511 residues: Maturase K (511 aa).

The protein belongs to the intron maturase 2 family. MatK subfamily.

The protein resides in the plastid. The protein localises to the chloroplast. Usually encoded in the trnK tRNA gene intron. Probably assists in splicing its own and other chloroplast group II introns. The sequence is that of Maturase K from Bowiea volubilis (Climbing onion).